Consider the following 89-residue polypeptide: Large ribosomal subunit protein bL27 (89 aa).

The segment at 1–20 (MAHKKAGGSSRNGRDSAGRR) is disordered.

Belongs to the bacterial ribosomal protein bL27 family.

This is Large ribosomal subunit protein bL27 from Jannaschia sp. (strain CCS1).